Consider the following 1720-residue polypeptide: 182 kDa tankyrase-1-binding protein (1720 aa).

The tract at residues 1–137 (MKGSTLREGT…PPLTPPARCA (137 aa)) is disordered. Ser-14 carries the post-translational modification Phosphoserine. The segment covering 117-127 (SGKEDAGKEDL) has biased composition (basic and acidic residues). Thr-131 is modified (phosphothreonine). Residues Ser-178 and Ser-220 each carry the phosphoserine modification. 2 disordered regions span residues 185 to 472 (SRLT…ESNW) and 485 to 595 (RPSG…EDQE). Positions 209-1563 (EEDSKSPAKG…TEILDSAMYR (1355 aa)) are acidic. A compositionally biased stretch (basic and acidic residues) spans 232–243 (QEEHSKTPEERN). Thr-238 is modified (phosphothreonine). A compositionally biased stretch (polar residues) spans 266 to 287 (VSKTWVTSSADPVSEHGGSTSA). Phosphoserine occurs at positions 286 and 300. Residues 296 to 316 (PASESPRLSSRPSSPCHSQLS) show a composition bias toward low complexity. Polar residues predominate over residues 317-327 (ETQSPAASEAS). Phosphoserine occurs at positions 429 and 437. A compositionally biased stretch (polar residues) spans 449–459 (TLPQGQGSQSA). Ser-496 and Ser-500 each carry phosphoserine. Residues 502–518 (ITEASEAAEAAEADSWA) show a composition bias toward low complexity. A phosphothreonine mark is found at Thr-503 and Thr-533. Phosphoserine occurs at positions 539, 568, 602, 673, 692, and 713. Disordered regions lie at residues 659–720 (TTLP…CSEG), 734–924 (GVAT…EFEK), and 955–1081 (SGGG…GWAG). The span at 742–758 (SSFGSSSWSQDTSQNYS) shows a compositional bias: low complexity. Phosphoserine occurs at positions 763, 796, 807, 845, 866, 871, 876, 887, 912, 976, 980, 1006, 1017, and 1022. Positions 840-866 (FGKRESQDPHSIHDKELQDQEFGKRDS) are enriched in basic and acidic residues. Over residues 991–1014 (FEKKTPVGEDRFCEASRDVGHLEE) the composition is skewed to basic and acidic residues. The span at 1027-1039 (HSRDGAARPKDEG) shows a compositional bias: basic and acidic residues. A phosphoserine mark is found at Ser-1047, Ser-1063, Ser-1084, Ser-1096, Ser-1126, Ser-1131, Ser-1171, Ser-1212, Ser-1241, and Ser-1246. The interval 1128–1153 (AGLSPSRKSGGGHFVPPGETKAGAVD) is disordered. The interval 1198–1255 (LARRLGTGESEEPRSLGVGEKDWTSSVEARNRDLPGQAEVGRHSQARESGVGEPDWSG) is disordered. Residues 1208 to 1230 (EEPRSLGVGEKDWTSSVEARNRD) show a composition bias toward basic and acidic residues. A Phosphothreonine modification is found at Thr-1275. Phosphoserine occurs at positions 1290, 1321, 1324, 1373, and 1375. The segment at 1358-1546 (GRVGPDLELD…RGLLPSCPSE (189 aa)) is disordered. Polar residues predominate over residues 1402–1411 (EDSSSPSFET). Ser-1425, Ser-1429, Ser-1437, Ser-1440, Ser-1442, Ser-1463, and Ser-1466 each carry phosphoserine. Polar residues predominate over residues 1428–1457 (ASPSSCLTRSPPSGSQSLLEGIMTASSSKG). The interval 1440–1532 (SGSQSLLEGI…QNEQASAPPP (93 aa)) is tankyrase-binding. A compositionally biased stretch (low complexity) spans 1477-1489 (LAAGAGQGEPQEP). A Phosphoserine modification is found at Ser-1496. Polar residues predominate over residues 1515-1527 (WSLTGAARQNEQA). Phosphoserine is present on Ser-1549. The residue at position 1554 (Thr-1554) is a Phosphothreonine. The interval 1567-1720 (NLGRKRGHRA…QALKLKKKKI (154 aa)) is disordered. Basic residues predominate over residues 1568–1577 (LGRKRGHRAP). The span at 1593–1606 (SDTRLFQDSTEPRA) shows a compositional bias: basic and acidic residues. A phosphoserine mark is found at Ser-1611, Ser-1612, and Ser-1622. The short motif at 1620 to 1626 (PQSRRTR) is the Nuclear localization signal element. Lys-1635 is modified (N6-methyllysine). Phosphoserine occurs at positions 1643 and 1657. Positions 1656–1670 (RSAEEGEVTESKSSQ) are enriched in basic and acidic residues. The span at 1671 to 1690 (KESSVQRSKSCKVPGLGKPL) shows a compositional bias: low complexity. Ser-1706 is modified (phosphoserine). Residues 1714–1719 (KLKKKK) carry the Nuclear localization signal motif.

As to quaternary structure, binds to the ANK repeat domain of TNKS1 and TNKS2. ADP-ribosylated by TNKS1.

The protein resides in the nucleus. The protein localises to the cytoplasm. It is found in the cytoskeleton. Its subcellular location is the chromosome. The polypeptide is 182 kDa tankyrase-1-binding protein (Tnks1bp1) (Mus musculus (Mouse)).